The following is a 50-amino-acid chain: Insulin-1 (50 aa).

Cystine bridges form between cysteine 7–cysteine 36, cysteine 19–cysteine 49, and cysteine 35–cysteine 40.

The protein belongs to the insulin family. As to quaternary structure, heterodimer of a B chain and an A chain linked by two disulfide bonds.

The protein resides in the secreted. Functionally, insulin decreases blood glucose concentration. It increases cell permeability to monosaccharides, amino acids and fatty acids. It accelerates glycolysis, the pentose phosphate cycle, and glycogen synthesis in liver. This Thunnus orientalis (North Pacific bluefin tuna) protein is Insulin-1.